A 252-amino-acid polypeptide reads, in one-letter code: Tricin synthase 1 (252 aa).

S-adenosyl-L-methionine is bound by residues Ser-65, Glu-87, 89 to 90 (GV), Ser-95, and Asp-113. A divalent metal cation is bound at residue Asp-168. Asp-170 serves as a coordination point for S-adenosyl-L-methionine. Asp-194 and Asn-195 together coordinate a divalent metal cation.

Belongs to the class I-like SAM-binding methyltransferase superfamily. Cation-dependent O-methyltransferase family. CCoAMT subfamily. It depends on Mg(2+) as a cofactor. Mn(2+) is required as a cofactor. The cofactor is Co(2+). Ubiquitous. Highest expression in stems and roots.

It localises to the nucleus. The catalysed reaction is tricetin + 2 S-adenosyl-L-methionine = 3',5'-di-O-methyltricetin + 2 S-adenosyl-L-homocysteine + 2 H(+). Functionally, catalyzes the stepwise methylation of tricetin to its 3'-mono- and 3',5'-dimethyl ethers. No 3',4',5'-trimethylated ester derivatives are produced. Can use caffeoyl-CoA, 5-hydroxyferulic acid, luteolin, tricetin, quercetin, myrcetin and 7,8-dihydroxyflavone as substrates, but not naringenin, apigenin or kaempferol. The 2,3-double bond and the O-dihydroxyl group of the substrate are both required for catalytic activity of the enzyme. In Oryza sativa subsp. japonica (Rice), this protein is Tricin synthase 1 (ROMT-15).